Here is a 544-residue protein sequence, read N- to C-terminus: Chaperonin GroEL (544 aa).

Residues 29–32, 86–90, Gly413, 477–479, and Asp493 contribute to the ATP site; these read TLGP, DGTTT, and DVL.

Belongs to the chaperonin (HSP60) family. Forms a cylinder of 14 subunits composed of two heptameric rings stacked back-to-back. Interacts with the co-chaperonin GroES.

The protein localises to the cytoplasm. It carries out the reaction ATP + H2O + a folded polypeptide = ADP + phosphate + an unfolded polypeptide.. In terms of biological role, together with its co-chaperonin GroES, plays an essential role in assisting protein folding. The GroEL-GroES system forms a nano-cage that allows encapsulation of the non-native substrate proteins and provides a physical environment optimized to promote and accelerate protein folding. The chain is Chaperonin GroEL from Clostridium kluyveri (strain NBRC 12016).